The primary structure comprises 168 residues: Nicotinamide-nucleotide adenylyltransferase (168 aa).

Positions 8, 9, 13, 16, 119, 121, 124, 126, 127, and 130 each coordinate ATP.

The protein belongs to the archaeal NMN adenylyltransferase family. As to quaternary structure, homohexamer existing as a trimer of dimers.

Its subcellular location is the cytoplasm. It catalyses the reaction beta-nicotinamide D-ribonucleotide + ATP + H(+) = diphosphate + NAD(+). It participates in cofactor biosynthesis; NAD(+) biosynthesis; NAD(+) from nicotinamide D-ribonucleotide: step 1/1. Catalyzes the formation of NAD(+) from nicotinamide mononucleotide (NMN) and ATP. The chain is Nicotinamide-nucleotide adenylyltransferase from Methanocaldococcus jannaschii (strain ATCC 43067 / DSM 2661 / JAL-1 / JCM 10045 / NBRC 100440) (Methanococcus jannaschii).